The following is a 294-amino-acid chain: 4-hydroxy-tetrahydrodipicolinate synthase (294 aa).

T47 contacts pyruvate. Y136 serves as the catalytic Proton donor/acceptor. K164 serves as the catalytic Schiff-base intermediate with substrate. V206 is a pyruvate binding site.

The protein belongs to the DapA family. As to quaternary structure, homotetramer; dimer of dimers.

Its subcellular location is the cytoplasm. It carries out the reaction L-aspartate 4-semialdehyde + pyruvate = (2S,4S)-4-hydroxy-2,3,4,5-tetrahydrodipicolinate + H2O + H(+). It functions in the pathway amino-acid biosynthesis; L-lysine biosynthesis via DAP pathway; (S)-tetrahydrodipicolinate from L-aspartate: step 3/4. Catalyzes the condensation of (S)-aspartate-beta-semialdehyde [(S)-ASA] and pyruvate to 4-hydroxy-tetrahydrodipicolinate (HTPA). The chain is 4-hydroxy-tetrahydrodipicolinate synthase from Nostoc sp. (strain PCC 7120 / SAG 25.82 / UTEX 2576).